Reading from the N-terminus, the 143-residue chain is Large ribosomal subunit protein uL11 (143 aa).

The protein belongs to the universal ribosomal protein uL11 family. As to quaternary structure, part of the ribosomal stalk of the 50S ribosomal subunit. Interacts with L10 and the large rRNA to form the base of the stalk. L10 forms an elongated spine to which L12 dimers bind in a sequential fashion forming a multimeric L10(L12)X complex. Post-translationally, one or more lysine residues are methylated.

Functionally, forms part of the ribosomal stalk which helps the ribosome interact with GTP-bound translation factors. The chain is Large ribosomal subunit protein uL11 from Borreliella afzelii (strain PKo) (Borrelia afzelii).